The primary structure comprises 335 residues: tRNA pseudouridine synthase D (335 aa).

Aspartate 77 serves as the catalytic Nucleophile. Positions 152 to 308 (GFPNYFTEQR…AQNLNWQFEP (157 aa)) constitute a TRUD domain.

This sequence belongs to the pseudouridine synthase TruD family.

It catalyses the reaction uridine(13) in tRNA = pseudouridine(13) in tRNA. In terms of biological role, responsible for synthesis of pseudouridine from uracil-13 in transfer RNAs. The chain is tRNA pseudouridine synthase D from Actinobacillus succinogenes (strain ATCC 55618 / DSM 22257 / CCUG 43843 / 130Z).